Reading from the N-terminus, the 198-residue chain is Shikimate kinase (198 aa).

26-31 (GSGKSQ) contacts ATP. Position 30 (Ser-30) interacts with Mg(2+). Substrate is bound by residues Asp-48, Arg-72, and Gly-94. Arg-132 serves as a coordination point for ATP. Arg-151 is a binding site for substrate. ATP is bound at residue Gln-167.

The protein belongs to the shikimate kinase family. As to quaternary structure, monomer. It depends on Mg(2+) as a cofactor.

The protein resides in the cytoplasm. The catalysed reaction is shikimate + ATP = 3-phosphoshikimate + ADP + H(+). Its pathway is metabolic intermediate biosynthesis; chorismate biosynthesis; chorismate from D-erythrose 4-phosphate and phosphoenolpyruvate: step 5/7. Functionally, catalyzes the specific phosphorylation of the 3-hydroxyl group of shikimic acid using ATP as a cosubstrate. The sequence is that of Shikimate kinase from Prochlorococcus marinus (strain NATL2A).